Reading from the N-terminus, the 520-residue chain is 2-isopropylmalate synthase (520 aa).

The region spanning 5–267 (VIIFDTTLRD…HTNINHQEIY (263 aa)) is the Pyruvate carboxyltransferase domain. Residues Asp-14, His-202, His-204, and Asn-238 each contribute to the Mn(2+) site. The regulatory domain stretch occupies residues 392-520 (RLDYFSVQSG…RLQQNNQEMV (129 aa)).

This sequence belongs to the alpha-IPM synthase/homocitrate synthase family. LeuA type 1 subfamily. Homodimer. Requires Mn(2+) as cofactor.

The protein localises to the cytoplasm. It carries out the reaction 3-methyl-2-oxobutanoate + acetyl-CoA + H2O = (2S)-2-isopropylmalate + CoA + H(+). The protein operates within amino-acid biosynthesis; L-leucine biosynthesis; L-leucine from 3-methyl-2-oxobutanoate: step 1/4. Its function is as follows. Catalyzes the condensation of the acetyl group of acetyl-CoA with 3-methyl-2-oxobutanoate (2-ketoisovalerate) to form 3-carboxy-3-hydroxy-4-methylpentanoate (2-isopropylmalate). This Yersinia enterocolitica serotype O:8 / biotype 1B (strain NCTC 13174 / 8081) protein is 2-isopropylmalate synthase.